We begin with the raw amino-acid sequence, 251 residues long: MRSGVIVKKVGMTRLFMEDGRHVPVTVLKLDNCQVVSQRTDEKNGYTAVQLGTGRAKAKNVANAQRGQFARASVEPKLELVEFRVSPDNLLDVGVEITADHFIAGQYVDVSGTSIGKGFAGVMKRHNFGGLRATHGVSVSHRSHGSTGQNQDPGKVFKGKKMAGHMGATRVTTQNLEVVRTDADKGLIMVKGAVPGSKGGWVLVRDAVKTKLPEGVPVPGAFRRNGEEAAAAPAAEAPAETPAEEAGQEGA.

Glutamine 151 is modified (N5-methylglutamine). The segment at 219 to 251 is disordered; it reads PGAFRRNGEEAAAAPAAEAPAETPAEEAGQEGA. The span at 228–241 shows a compositional bias: low complexity; the sequence is EAAAAPAAEAPAET. Residues 242–251 show a composition bias toward acidic residues; it reads PAEEAGQEGA.

It belongs to the universal ribosomal protein uL3 family. Part of the 50S ribosomal subunit. Forms a cluster with proteins L14 and L19. Methylated by PrmB.

Functionally, one of the primary rRNA binding proteins, it binds directly near the 3'-end of the 23S rRNA, where it nucleates assembly of the 50S subunit. The sequence is that of Large ribosomal subunit protein uL3 from Parvibaculum lavamentivorans (strain DS-1 / DSM 13023 / NCIMB 13966).